A 147-amino-acid chain; its full sequence is Hemoglobin subunit beta (147 aa).

V2 is subject to N-acetylvaline. Positions 3–147 (HLSGSEKTAV…VSHALAHKYH (145 aa)) constitute a Globin domain. A Phosphothreonine modification is found at T13. S45 is subject to Phosphoserine. The residue at position 60 (K60) is an N6-acetyllysine. Residue H64 participates in heme b binding. An N6-acetyllysine modification is found at K83. H93 lines the heme b pocket. An S-nitrosocysteine modification is found at C94. At K145 the chain carries N6-acetyllysine.

It belongs to the globin family. In terms of assembly, heterotetramer of two alpha chains and two beta chains. In terms of tissue distribution, red blood cells.

Functionally, involved in oxygen transport from the lung to the various peripheral tissues. This Tachyglossus aculeatus aculeatus (Southeast Australian short-beaked echidna) protein is Hemoglobin subunit beta (HBB).